Reading from the N-terminus, the 103-residue chain is Co-chaperonin GroES (103 aa).

It belongs to the GroES chaperonin family. As to quaternary structure, heptamer of 7 subunits arranged in a ring. Interacts with the chaperonin GroEL.

The protein resides in the cytoplasm. Its function is as follows. Together with the chaperonin GroEL, plays an essential role in assisting protein folding. The GroEL-GroES system forms a nano-cage that allows encapsulation of the non-native substrate proteins and provides a physical environment optimized to promote and accelerate protein folding. GroES binds to the apical surface of the GroEL ring, thereby capping the opening of the GroEL channel. This chain is Co-chaperonin GroES, found in Thermosynechococcus vestitus (strain NIES-2133 / IAM M-273 / BP-1).